The following is a 524-amino-acid chain: GMP synthase [glutamine-hydrolyzing] (524 aa).

The Glutamine amidotransferase type-1 domain maps to 9–207; that stretch reads RILILDFGSQ…VIHICQCIPN (199 aa). Cys-86 functions as the Nucleophile in the catalytic mechanism. Active-site residues include His-181 and Glu-183. Residues 208-399 enclose the GMPS ATP-PPase domain; that stretch reads WTTKHIIEDS…LGLPADLIYR (192 aa). 235–241 contributes to the ATP binding site; it reads SGGVDSA.

As to quaternary structure, homodimer.

It catalyses the reaction XMP + L-glutamine + ATP + H2O = GMP + L-glutamate + AMP + diphosphate + 2 H(+). Its pathway is purine metabolism; GMP biosynthesis; GMP from XMP (L-Gln route): step 1/1. Its function is as follows. Catalyzes the synthesis of GMP from XMP. The protein is GMP synthase [glutamine-hydrolyzing] of Coxiella burnetii (strain RSA 493 / Nine Mile phase I).